The chain runs to 106 residues: Large ribosomal subunit protein P1B (106 aa).

Serine 2 is subject to N-acetylserine. A compositionally biased stretch (low complexity) spans 69–82; that stretch reads AGAASGAAAAGGDA. The interval 69–106 is disordered; that stretch reads AGAASGAAAAGGDAAAEEEKEEEAAEESDDDMGFGLFD. Acidic residues predominate over residues 83–100; that stretch reads AAEEEKEEEAAEESDDDM. Serine 96 carries the phosphoserine modification.

Belongs to the eukaryotic ribosomal protein P1/P2 family. As to quaternary structure, component of the large ribosomal subunit (LSU). Mature yeast ribosomes consist of a small (40S) and a large (60S) subunit. The 40S small subunit contains 1 molecule of ribosomal RNA (18S rRNA) and 33 different proteins (encoded by 57 genes). The large 60S subunit contains 3 rRNA molecules (25S, 5.8S and 5S rRNA) and 46 different proteins (encoded by 81 genes). The 5 acidic ribosomal P-proteins form the stalk structure of the 60S subunit. They are organized as a pentameric complex in which uL10/P0 interacts with 2 heterodimers, P1A-P2B and P1B-P2A.

The protein resides in the cytoplasm. In terms of biological role, component of the ribosome, a large ribonucleoprotein complex responsible for the synthesis of proteins in the cell. The small ribosomal subunit (SSU) binds messenger RNAs (mRNAs) and translates the encoded message by selecting cognate aminoacyl-transfer RNA (tRNA) molecules. The large subunit (LSU) contains the ribosomal catalytic site termed the peptidyl transferase center (PTC), which catalyzes the formation of peptide bonds, thereby polymerizing the amino acids delivered by tRNAs into a polypeptide chain. The nascent polypeptides leave the ribosome through a tunnel in the LSU and interact with protein factors that function in enzymatic processing, targeting, and the membrane insertion of nascent chains at the exit of the ribosomal tunnel. This Saccharomyces cerevisiae (strain ATCC 204508 / S288c) (Baker's yeast) protein is Large ribosomal subunit protein P1B.